Consider the following 370-residue polypeptide: Putative agmatine deiminase (370 aa).

A compositionally biased stretch (polar residues) spans 1 to 19 (MTNMNVDATQLTTKPSQDG). The tract at residues 1–20 (MTNMNVDATQLTTKPSQDGF) is disordered. Catalysis depends on C361, which acts as the Amidino-cysteine intermediate.

Belongs to the agmatine deiminase family.

It catalyses the reaction agmatine + H2O = N-carbamoylputrescine + NH4(+). The polypeptide is Putative agmatine deiminase (Shewanella frigidimarina (strain NCIMB 400)).